The following is a 97-amino-acid chain: uncharacterized protein (97 aa).

This is an uncharacterized protein from Caenorhabditis elegans.